The following is a 462-amino-acid chain: Lysophospholipid acyltransferase 1 (462 aa).

A run of 9 helical transmembrane segments spans residues 9–29, 52–72, 84–104, 158–178, 211–231, 263–283, 353–373, 396–416, and 431–451; these read SIGV…TIPV, FLSY…PMTI, CGII…VFYM, SLIE…GPVY, AILQ…QYPL, YFIW…FSGW, AVWH…ALMI, IMVF…AVGF, and VYYI…VVPA. The active site involves histidine 356.

Belongs to the membrane-bound acyltransferase family. Expressed in roots, rosette leaves, petals, stigma, chalazal endosperm of developing seeds and vascular bundles of siliques.

The protein resides in the endoplasmic reticulum membrane. The enzyme catalyses a 1-acyl-sn-glycero-3-phosphocholine + an acyl-CoA = a 1,2-diacyl-sn-glycero-3-phosphocholine + CoA. It catalyses the reaction 1-(9Z-octadecenoyl)-sn-glycero-3-phosphocholine + (9Z)-octadecenoyl-CoA = 1,2-di-(9Z-octadecenoyl)-sn-glycero-3-phosphocholine + CoA. It carries out the reaction 1-(9Z-octadecenoyl)-sn-glycero-3-phosphocholine + (9Z,12Z)-octadecadienoyl-CoA = 1-(9Z)-octadecenoyl-2-(9Z,12Z)-octadecadienoyl-sn-glycero-3-phosphocholine + CoA. The catalysed reaction is (9Z,12Z,15Z)-octadecatrienoyl-CoA + 1-(9Z-octadecenoyl)-sn-glycero-3-phosphocholine = 1-(9Z-octadecaenoyl)-2-(9Z,12Z,15Z-octadecatrienoyl)-sn-glycero-3-phosphocholine + CoA. The enzyme catalyses a 1-acyl-sn-glycero-3-phosphoethanolamine + an acyl-CoA = a 1,2-diacyl-sn-glycero-3-phosphoethanolamine + CoA. It catalyses the reaction a 1-acyl-sn-glycero-3-phospho-L-serine + an acyl-CoA = a 1,2-diacyl-sn-glycero-3-phospho-L-serine + CoA. Functionally, lysophospholipid acyltransferase with broad specificity. Mediates the conversion of lysophosphatidylethanolamine (1-acyl-sn-glycero-3-phosphoethanolamine or LPE) into phosphatidylethanolamine (1,2-diacyl-sn-glycero-3-phosphoethanolamine or PE) (LPEAT activity). Catalyzes the acylation of lysophosphatidylserine (1-acyl-2-hydroxy-sn-glycero-3-phospho-L-serine or LPS) into phosphatidylserine (1,2-diacyl-sn-glycero-3-phospho-L-serine or PS) (LPSAT activity). Can convert lysophosphatidylcholine (1-acyl-sn-glycero-3-phosphocholine or LPC) into phosphatidylcholine (1,2-diacyl-sn-glycero-3-phosphocholine or PC) (LPCAT activity). Exhibits preference for C18-unsaturated acyl-CoA when transferring an acyl group to lysophosphatidylcholine. Can also utilize lysophosphatidylglycerol (LPG) as substrate in vitro. Has neither activity towards lysophosphatidic acid (LPA) nor lysophosphatidylinositol (LPI). Lysophospholipid acyltransferases catalyze the reacylation step of the phospholipid remodeling pathway also known as the Lands cycle. The primary function of the Lands cycle is to provide a route for acyl remodeling to modify fatty acid (FA) composition of phospholipids derived from the Kennedy pathway. Is involved in PC acyl editing and phosphocholine headgroup exchange between PC and diacylglycerols. This processes control the majority of acyl fluxes through PC to provide polyunsaturated fatty acids for triacylglycerols synthesis in seeds. Involved with LPCAT2 in the direct incorporation of newly synthesized fatty acids exported form the chloroplast into PC through acyl editing. The chain is Lysophospholipid acyltransferase 1 from Arabidopsis thaliana (Mouse-ear cress).